The chain runs to 315 residues: Zinc finger transcription factor ref-2 (315 aa).

The C2H2-type 1; atypical zinc-finger motif lies at 83 to 112; the sequence is VQCLWETNGQVCMHVCQNSGELSTHISSNH. The C2H2-type 2; degenerate zinc finger occupies 124 to 146; that stretch reads KGCDREFKMFKAKYKLVNHMRVH. 3 C2H2-type zinc fingers span residues 152–174, 180–204, and 210–234; these read FLCDVCNKVFARSENLKIHKRIH, FQCTHNGCTKLFANSSDRKKHMHVH, and YSCMYPDCGKTYTHPSSLRKHTKVH. The disordered stretch occupies residues 225-270; that stretch reads SSLRKHTKVHENEKKSQLSPEHDESSDSGNASIGTPTTDESLTFSP. Residues 233–249 are compositionally biased toward basic and acidic residues; that stretch reads VHENEKKSQLSPEHDES. Positions 251-270 are enriched in polar residues; that stretch reads DSGNASIGTPTTDESLTFSP.

In terms of assembly, interacts with TCF transcription factor pop-1; the interaction is direct and facilitates transcriptional activation; transcription may be repressed by beta-catenin/sys-1.

It localises to the nucleus. Its subcellular location is the cytoplasm. Its function is as follows. Transcription factor. Modulates expression of target genes by binding to regulatory elements. Required for normal cell division timing and cell positioning in anterior lineages, acting in a cell-autonomous manner. Required for development, fusion and fate of cells of the ventral epidermis, the Pn.p cells, during larval development; acts in concert with homeobox genes lin-39 and mab-5. Required for the specification of the AIY interneuron. In complex with TCF transcription factor pop-1, positively modulates expression of LIM/homeobox protein ttx-3 in anterior daughter cells of the SMDD/AIY neuron lineage. This Caenorhabditis elegans protein is Zinc finger transcription factor ref-2.